The primary structure comprises 225 residues: Dehydrin DHN4 (225 aa).

The tract at residues 1–78 (MEYQGQQHGR…EDDGMGGRRK (78 aa)) is disordered. Residues 21-39 (HGVGTGMGTHGGVGTGAAA) show a composition bias toward gly residues. 5 tandem repeats follow at residues 105-118 (YGQQGTGMAGTGGT), 119-136 (YGQQGHTGMTGMGATDGT), 137-159 (YGQQGHTGMAGTGAHGTAATGGT), 160-178 (YGQQGHTGMTGTGMHGTGG), and 179-199 (TYGQQGHTGMTGTGMHGTGGT). Residues 105 to 199 (YGQQGTGMAG…GTGMHGTGGT (95 aa)) form a 5 X approximate tandem repeats region.

The protein belongs to the plant dehydrin family.

This chain is Dehydrin DHN4 (DHN4), found in Hordeum vulgare (Barley).